The sequence spans 20 residues: Brevinin-1DYc (20 aa).

Cysteines 14 and 20 form a disulfide.

Expressed by the skin glands.

Its subcellular location is the secreted. Its function is as follows. Antimicrobial peptide. Has low activity against the Gram-positive bacterium S.aureus and the Gram-negative bacterium E.coli (MIC&lt;15 uM). Has a strong hemolytic activity. This is Brevinin-1DYc from Rana dybowskii (Dybovsky's frog).